Reading from the N-terminus, the 339-residue chain is Ureidoglycine carbamoyltransferase (339 aa).

It belongs to the aspartate/ornithine carbamoyltransferase superfamily. As to quaternary structure, homodimer.

The enzyme catalyses (S)-2-ureidoglycine + carbamoyl phosphate = allantoate + phosphate + H(+). It functions in the pathway purine metabolism. In terms of biological role, catalyzes the phosphorolysis of allantoate to ureidoglycine and carbamoyl phosphate. Is likely involved in a purine degradation pathway. The chain is Ureidoglycine carbamoyltransferase from Rubrobacter xylanophilus (strain DSM 9941 / JCM 11954 / NBRC 16129 / PRD-1).